The primary structure comprises 216 residues: Imidazole glycerol phosphate synthase subunit HisH (216 aa).

One can recognise a Glutamine amidotransferase type-1 domain in the interval 2–216; that stretch reads RVAIIDYGSG…LISNFLRWKP (215 aa). Cysteine 88 acts as the Nucleophile in catalysis. Active-site residues include histidine 196 and glutamate 198.

In terms of assembly, heterodimer of HisH and HisF.

The protein localises to the cytoplasm. The catalysed reaction is 5-[(5-phospho-1-deoxy-D-ribulos-1-ylimino)methylamino]-1-(5-phospho-beta-D-ribosyl)imidazole-4-carboxamide + L-glutamine = D-erythro-1-(imidazol-4-yl)glycerol 3-phosphate + 5-amino-1-(5-phospho-beta-D-ribosyl)imidazole-4-carboxamide + L-glutamate + H(+). The enzyme catalyses L-glutamine + H2O = L-glutamate + NH4(+). The protein operates within amino-acid biosynthesis; L-histidine biosynthesis; L-histidine from 5-phospho-alpha-D-ribose 1-diphosphate: step 5/9. IGPS catalyzes the conversion of PRFAR and glutamine to IGP, AICAR and glutamate. The HisH subunit catalyzes the hydrolysis of glutamine to glutamate and ammonia as part of the synthesis of IGP and AICAR. The resulting ammonia molecule is channeled to the active site of HisF. The protein is Imidazole glycerol phosphate synthase subunit HisH of Agrobacterium fabrum (strain C58 / ATCC 33970) (Agrobacterium tumefaciens (strain C58)).